A 1023-amino-acid chain; its full sequence is Probable histidine kinase 3 (1023 aa).

The Cytoplasmic segment spans residues 1-80 (MDEMSCGGGG…RGWRVVRETW (80 aa)). A helical membrane pass occupies residues 81–101 (WWVLLLWILAGSLGSFYLFLF). Residues 102-387 (MNAQSLDKRR…CRFEKKPPWP (286 aa)) are Extracellular-facing. The 202-residue stretch at 151–352 (TPSAIDQMTF…TNESPISMYG (202 aa)) folds into the CHASE domain. A helical transmembrane segment spans residues 388 to 408 (WLAITSSFGTLVIALLTGHIF). Topologically, residues 409–1023 (QATVHRIAKV…RFFQNHDQVE (615 aa)) are cytoplasmic. Positions 445 to 715 (TVSHEIRTPM…TFTFTAVLMR (271 aa)) constitute a Histidine kinase domain. Phosphohistidine; by autocatalysis is present on histidine 448. 2 Response regulatory domains span residues 732–854 (NALV…RRAL) and 880–1016 (QIIV…ARFF). At aspartate 783 the chain carries 4-aspartylphosphate. Residues 812–831 (LFLLGSSASSPKGGSDTSRE) form a disordered region. Polar residues predominate over residues 817 to 827 (SSASSPKGGSD). Aspartate 930 carries the post-translational modification 4-aspartylphosphate.

Activation probably requires a transfer of a phosphate group between a His in the transmitter domain and an Asp of the receiver domain. In terms of tissue distribution, highly expressed in young leaves and at lower levels in roots, mature leaves, stems and spikelets.

It localises to the cell membrane. It catalyses the reaction ATP + protein L-histidine = ADP + protein N-phospho-L-histidine.. In terms of biological role, cytokinin receptor related to bacterial two-component regulators. Functions as a histidine kinase and transmits the stress signal to a downstream MAPK cascade. The protein is Probable histidine kinase 3 of Oryza sativa subsp. japonica (Rice).